Reading from the N-terminus, the 268-residue chain is tRNA pseudouridine synthase A (268 aa).

The Nucleophile role is filled by D52. Residue Y110 coordinates substrate.

The protein belongs to the tRNA pseudouridine synthase TruA family. Homodimer.

The enzyme catalyses uridine(38/39/40) in tRNA = pseudouridine(38/39/40) in tRNA. Formation of pseudouridine at positions 38, 39 and 40 in the anticodon stem and loop of transfer RNAs. In Prochlorococcus marinus (strain MIT 9215), this protein is tRNA pseudouridine synthase A.